A 492-amino-acid polypeptide reads, in one-letter code: Uridine-cytidine kinase D (492 aa).

A disordered region spans residues 36 to 56; that stretch reads PLPKNKKDHDQSIESDSSFTR. 117–124 contributes to the ATP binding site; sequence GPVGAGKT. The 171-residue stretch at 290-460 folds into the CYTH domain; the sequence is EPVYVCKAKY…PQTFLYLYFK (171 aa). A compositionally biased stretch (low complexity) spans 468-483; that stretch reads PNYSKLKPNNTNSKIL. A disordered region spans residues 468–492; it reads PNYSKLKPNNTNSKILKNNKDKKNL.

This sequence belongs to the uridine kinase family.

It carries out the reaction uridine + ATP = UMP + ADP + H(+). The catalysed reaction is cytidine + ATP = CMP + ADP + H(+). It participates in pyrimidine metabolism; CTP biosynthesis via salvage pathway; CTP from cytidine: step 1/3. The protein operates within pyrimidine metabolism; UMP biosynthesis via salvage pathway; UMP from uridine: step 1/1. Catalyzes the conversion of uridine into uridine monophosphate and cytidine into cytidine monophosphate in the pyrimidine salvage pathway. The chain is Uridine-cytidine kinase D (udkD) from Dictyostelium discoideum (Social amoeba).